A 446-amino-acid chain; its full sequence is Tubulin beta chain (446 aa).

Residues Gln-11, Glu-69, Ser-138, Gly-142, Thr-143, Gly-144, Asn-204, and Asn-226 each contribute to the GTP site. Glu-69 contributes to the Mg(2+) binding site. The tract at residues 425–446 (YQEASISEGEEEYPEEVSNEEE) is disordered. Residues 432–446 (EGEEEYPEEVSNEEE) are compositionally biased toward acidic residues.

It belongs to the tubulin family. In terms of assembly, dimer of alpha and beta chains. A typical microtubule is a hollow water-filled tube with an outer diameter of 25 nm and an inner diameter of 15 nM. Alpha-beta heterodimers associate head-to-tail to form protofilaments running lengthwise along the microtubule wall with the beta-tubulin subunit facing the microtubule plus end conferring a structural polarity. Microtubules usually have 13 protofilaments but different protofilament numbers can be found in some organisms and specialized cells. It depends on Mg(2+) as a cofactor.

It localises to the cytoplasm. The protein localises to the cytoskeleton. Tubulin is the major constituent of microtubules, a cylinder consisting of laterally associated linear protofilaments composed of alpha- and beta-tubulin heterodimers. Microtubules grow by the addition of GTP-tubulin dimers to the microtubule end, where a stabilizing cap forms. Below the cap, tubulin dimers are in GDP-bound state, owing to GTPase activity of alpha-tubulin. The protein is Tubulin beta chain (TUB2) of Blumeria hordei (Barley powdery mildew).